Reading from the N-terminus, the 203-residue chain is Molybdenum cofactor guanylyltransferase (203 aa).

GTP contacts are provided by residues 20–22 (LAG), Lys-33, Asn-61, Asp-78, and Asp-108. Asp-108 contributes to the Mg(2+) binding site.

It belongs to the MobA family. In terms of assembly, monomer. Requires Mg(2+) as cofactor.

It localises to the cytoplasm. The enzyme catalyses Mo-molybdopterin + GTP + H(+) = Mo-molybdopterin guanine dinucleotide + diphosphate. Its function is as follows. Transfers a GMP moiety from GTP to Mo-molybdopterin (Mo-MPT) cofactor (Moco or molybdenum cofactor) to form Mo-molybdopterin guanine dinucleotide (Mo-MGD) cofactor. The polypeptide is Molybdenum cofactor guanylyltransferase (Vibrio cholerae serotype O1 (strain ATCC 39315 / El Tor Inaba N16961)).